A 596-amino-acid chain; its full sequence is Jacalin-related lectin 46 (596 aa).

The segment at 1–20 (MTERSEALGKDGNRRWDDKS) is disordered. Jacalin-type lectin domains lie at 2–143 (TERS…YFTR), 146–291 (PTRI…YFTP), 294–439 (PTKS…HFYP), and 446–592 (AEKL…HVLP).

This sequence belongs to the jacalin lectin family.

This is Jacalin-related lectin 46 (JAL46) from Arabidopsis thaliana (Mouse-ear cress).